A 140-amino-acid chain; its full sequence is Large ribosomal subunit protein uL11 (140 aa).

Belongs to the universal ribosomal protein uL11 family. Part of the ribosomal stalk of the 50S ribosomal subunit. Interacts with L10 and the large rRNA to form the base of the stalk. L10 forms an elongated spine to which L12 dimers bind in a sequential fashion forming a multimeric L10(L12)X complex. Post-translationally, one or more lysine residues are methylated.

Functionally, forms part of the ribosomal stalk which helps the ribosome interact with GTP-bound translation factors. The sequence is that of Large ribosomal subunit protein uL11 from Pelobacter propionicus (strain DSM 2379 / NBRC 103807 / OttBd1).